An 872-amino-acid chain; its full sequence is DNA mismatch repair protein MutS (872 aa).

The span at 1 to 17 (MSISKIESVNAEKQSPV) shows a compositional bias: polar residues. The tract at residues 1 to 22 (MSISKIESVNAEKQSPVGTEIG) is disordered. 632-639 (GPNMGGKS) contributes to the ATP binding site.

This sequence belongs to the DNA mismatch repair MutS family.

This protein is involved in the repair of mismatches in DNA. It is possible that it carries out the mismatch recognition step. This protein has a weak ATPase activity. In Azoarcus sp. (strain BH72), this protein is DNA mismatch repair protein MutS.